Here is a 175-residue protein sequence, read N- to C-terminus: Chromobox protein homolog hpl-2 (175 aa).

Residues phenylalanine 19 to arginine 78 enclose the Chromo domain. The tract at residues serine 71–lysine 109 is disordered. Over residues serine 88 to lysine 98 the composition is skewed to acidic residues. Over residues aspartate 99–lysine 109 the composition is skewed to basic and acidic residues. Positions lysine 115–alanine 172 constitute a Chromo 2; shadow subtype domain.

As to quaternary structure, interacts with histone H3 when di-, or tri-methylated at 'Lys-27' (H3K27me2/me3), or tri-methylated at 'Lys-9' (H3K9me3). Interacts with Tar DNA-binding protein homolog tdp-1; interaction may maintain localization of hpl-2 to gene bodies. Interacts with histone H1 his-24, probably via interaction with hpl-1. Interacts with chromobox protein homolog hpl-1. In terms of assembly, may form homodimers. Interacts (via chromo (shadow subtype) domain) with zinc finger protein lin-13 (via PLVPV motif); the interaction is direct and influences localization of hpl-2 to nuclear foci.

It is found in the nucleus. The protein resides in the chromosome. Seems to be involved in transcriptional silencing in heterochromatin-like complexes. Probably does not act as global transcriptional repressor, instead targeting a subset of genes. Involved in RNA processing mediated by Tar DNA-binding protein homolog tdp-1. Plays a role in linking epigenetic regulation with the innate immune response. Involved in the endoplasmic reticulum (ER) stress response via modulation of the unfolded protein response (UPR), acting mainly through the IRE1-XBP1 pathway and perhaps, to a lesser extent, through the autophagy pathway. May act in a common pathway with retinoblastoma-like protein homolog lin-35 and zinc finger protein lin-13 to influence the ER stress response in the intestine. Plays a role in the formation of the vulva and in fertility, acting together with a CoREST-like complex, and chromobox protein homolog hpl-1. Acting in concert with hpl-1 and histone H1 protein his-24, involved in reproduction, somatic gonad development, male tail development and vulval cell fate specification; perhaps as a result of modulating expression of Hox genes mab-5 and egl-5. In vulval cell fate specification may act by repressing transcription, of EGF family gene lin-3 in hypodermal hyp7, and of homeobox lin-39 in vulval precursor cells (VPC). Role in growth and somatic gonad development is antagonized by histone-lysine N-methyltransferase set-2/SET1. Required for larval development, acting redundantly with hpl-1. Plays a role in regulation of the developmentally arrested larval state known as dauer, longevity, and lipid metabolism. The chain is Chromobox protein homolog hpl-2 from Caenorhabditis elegans.